The following is a 345-amino-acid chain: UDP-3-O-acylglucosamine N-acyltransferase (345 aa).

His239 (proton acceptor) is an active-site residue.

It belongs to the transferase hexapeptide repeat family. LpxD subfamily. As to quaternary structure, homotrimer.

The enzyme catalyses a UDP-3-O-[(3R)-3-hydroxyacyl]-alpha-D-glucosamine + a (3R)-hydroxyacyl-[ACP] = a UDP-2-N,3-O-bis[(3R)-3-hydroxyacyl]-alpha-D-glucosamine + holo-[ACP] + H(+). The protein operates within bacterial outer membrane biogenesis; LPS lipid A biosynthesis. In terms of biological role, catalyzes the N-acylation of UDP-3-O-acylglucosamine using 3-hydroxyacyl-ACP as the acyl donor. Is involved in the biosynthesis of lipid A, a phosphorylated glycolipid that anchors the lipopolysaccharide to the outer membrane of the cell. In Geobacter metallireducens (strain ATCC 53774 / DSM 7210 / GS-15), this protein is UDP-3-O-acylglucosamine N-acyltransferase.